Here is a 588-residue protein sequence, read N- to C-terminus: Calicin (588 aa).

One can recognise a BTB domain in the interval 28–98; the sequence is WDMALTVDHH…FYSGKVVISE (71 aa). The 103-residue stretch at 133–235 folds into the BACK domain; the sequence is CLRYLFLAEL…NAVSNKTLMF (103 aa). A Phosphoserine modification is found at Ser149. Kelch repeat units lie at residues 280 to 327, 328 to 375, 377 to 423, 425 to 475, 476 to 525, and 526 to 580; these read SVVI…AAGR, YIYI…TCGG, VYSV…TKGD, NLYI…SFHQ, DNIL…IGDS, and KVFV…LAKL.

Interacts with CYLC1; the interaction may be relevant for proper acrosome attachment to the nuclear envelope. As to expression, expressed in testis and in spermatozoa.

Its subcellular location is the cytoplasm. The protein localises to the cytoskeleton. The protein resides in the perinuclear theca. It is found in the calyx. In terms of biological role, required for both nuclear and acrosomal shaping during spermiogenesis. The sequence is that of Calicin (Ccin) from Mus musculus (Mouse).